A 473-amino-acid chain; its full sequence is mRNA export factor ICP27 homolog (473 aa).

Disordered regions lie at residues Gln57–Tyr81 and Gln123–Met143. 4 residues coordinate Zn(2+): Cys362, His438, Cys442, and Cys447. A CHC2-type zinc finger spans residues Cys362–Cys447.

The protein belongs to the HHV-1 ICP27 protein family. Associates in a complex with RNA, and host export factors NXF1/TAP and ALYREF; these interactions allow nuclear export of viral transcripts.

Its subcellular location is the host cytoplasm. It is found in the host nucleus. In terms of biological role, multifunctional regulator of the expression of viral genes that mediates nuclear export of viral intronless mRNAs. This immediate early (EI) protein promotes the nuclear export of viral intronless mRNAs by interacting with mRNAs and host NXF1/TAP. This chain is mRNA export factor ICP27 homolog, found in Gallus gallus (Chicken).